A 29-amino-acid polypeptide reads, in one-letter code: LENRVAEKQKLFQEDNGLPVHLKGGATDN.

Residues Leu1–Gln13 show a composition bias toward basic and acidic residues. Residues Leu1 to Asn29 are disordered.

This sequence belongs to the cytochrome c oxidase VIIa family. In terms of assembly, component of the complex IV (CIV, cytochrome c oxidase), a multisubunit enzyme composed of 14 subunits. The complex is composed of a catalytic core of 3 subunits MT-CO1, MT-CO2 and MT-CO3, encoded in the mitochondrial DNA, and 11 supernumerary subunits COX4I1 (or COX4I2), COX5A, COX5B, COX6A2 (or COX6A1), COX6B1 (or COX6B2), COX6C, COX7A1 (or COX7A2), COX7B, COX7C, COX8B and NDUFA4, which are encoded in the nuclear genome. The complex exists as a monomer or a dimer and forms supercomplexes (SCs) in the inner mitochondrial membrane with NADH-ubiquinone oxidoreductase (complex I, CI) and ubiquinol-cytochrome c oxidoreductase (cytochrome b-c1 complex, complex III, CIII), resulting in different assemblies (supercomplex SCI(1)III(2)IV(1) and megacomplex MCI(2)III(2)IV(2)).

It localises to the mitochondrion inner membrane. It participates in energy metabolism; oxidative phosphorylation. Component of the mitochondrial respiratory complex IV (CIV, also named cytochrome c oxidase complex), the last enzyme in the mitochondrial electron transport chain which drives oxidative phosphorylation. The CIV complex is the component of the respiratory chain that catalyzes the reduction of oxygen to water. Acts as an assembly factor that specifically drives the homodimerization of CIV complexes, mediating the formation of mitochondrial respiratory supercomplexes (respirasomes) containing two CIV: supercomplxes with two molecules of CIV show improved activity. Despite being highly expressed in brown adipose tissue, not required for thermogenesis. The chain is Cytochrome c oxidase subunit 7A1, mitochondrial (COX7A1) from Ovis aries (Sheep).